A 230-amino-acid chain; its full sequence is DNA mismatch repair protein MutH (230 aa).

It belongs to the MutH family.

The protein localises to the cytoplasm. Sequence-specific endonuclease that cleaves unmethylated GATC sequences. It is involved in DNA mismatch repair. The sequence is that of DNA mismatch repair protein MutH from Citrobacter koseri (strain ATCC BAA-895 / CDC 4225-83 / SGSC4696).